The sequence spans 342 residues: MGHRKLSSPRRGSAGLRPRKRADEILPTPKNWPLVNLKEPKLLGFIGYKAGMTHVYMIDDKPTSPNYGKEVYTPVTIVESPPILGLALRAYHIDSKGELSVLVDYWANFEEGSLKYLKRKITSLKVDSSKMKEKLDLIQKNLNNITYMRLLVSTQPWLVPSLGKKRPEIVEIQIGGGSIQDQLNYGLSLLGKQIPVRDVFREGQLTDIIGVTKGKGFQGVIKRYSVVEFPRWHKHRKGSRKIGARGPSISTPSYVPQPGQLGFHRRTEYNKRIIKIGDNVNEINPAGGIVNYGLVKNTYLVIEGSVLGSRKRPLFLRYPIRPSWSPESAPKITYVNLASQQG.

Residues 1–22 (MGHRKLSSPRRGSAGLRPRKRA) are disordered.

This sequence belongs to the universal ribosomal protein uL3 family. Part of the 50S ribosomal subunit. Forms a cluster with proteins L14 and L24e.

Its function is as follows. One of the primary rRNA binding proteins, it binds directly near the 3'-end of the 23S rRNA, where it nucleates assembly of the 50S subunit. This chain is Large ribosomal subunit protein uL3, found in Sulfolobus acidocaldarius (strain ATCC 33909 / DSM 639 / JCM 8929 / NBRC 15157 / NCIMB 11770).